The following is a 332-amino-acid chain: Glycerol-3-phosphate dehydrogenase [NAD(P)+] (332 aa).

The NADPH site is built by S11, W12, R32, R33, and K106. Positions 106 and 136 each coordinate sn-glycerol 3-phosphate. A140 contributes to the NADPH binding site. The sn-glycerol 3-phosphate site is built by K191, D244, S254, R255, and N256. Residue K191 is the Proton acceptor of the active site. NADPH is bound at residue R255. Residues V280 and E282 each contribute to the NADPH site.

The protein belongs to the NAD-dependent glycerol-3-phosphate dehydrogenase family.

It is found in the cytoplasm. It catalyses the reaction sn-glycerol 3-phosphate + NAD(+) = dihydroxyacetone phosphate + NADH + H(+). The enzyme catalyses sn-glycerol 3-phosphate + NADP(+) = dihydroxyacetone phosphate + NADPH + H(+). Its pathway is membrane lipid metabolism; glycerophospholipid metabolism. Functionally, catalyzes the reduction of the glycolytic intermediate dihydroxyacetone phosphate (DHAP) to sn-glycerol 3-phosphate (G3P), the key precursor for phospholipid synthesis. This is Glycerol-3-phosphate dehydrogenase [NAD(P)+] from Corynebacterium urealyticum (strain ATCC 43042 / DSM 7109).